A 199-amino-acid chain; its full sequence is Glycerol-3-phosphate acyltransferase (199 aa).

Transmembrane regions (helical) follow at residues 5 to 25, 54 to 74, 82 to 102, 114 to 134, and 154 to 174; these read AYLLILTAYLLGSICSAIIFC, AAIGVLLFDTLKGSLPVLIAF, AIGLIGLAACLGHIFPIFFQF, VFFSISIIASTTMICAWLIVF, and YIWCFKPEFTFPVALICCLLI.

This sequence belongs to the PlsY family. As to quaternary structure, probably interacts with PlsX.

Its subcellular location is the cell inner membrane. The enzyme catalyses an acyl phosphate + sn-glycerol 3-phosphate = a 1-acyl-sn-glycero-3-phosphate + phosphate. The protein operates within lipid metabolism; phospholipid metabolism. Functionally, catalyzes the transfer of an acyl group from acyl-phosphate (acyl-PO(4)) to glycerol-3-phosphate (G3P) to form lysophosphatidic acid (LPA). This enzyme utilizes acyl-phosphate as fatty acyl donor, but not acyl-CoA or acyl-ACP. This is Glycerol-3-phosphate acyltransferase from Haemophilus ducreyi (strain 35000HP / ATCC 700724).